Consider the following 309-residue polypeptide: MITFLPIIFSSLVVVTFVIGNFANGFIALVNSIEWFKRQKISFADQILTALAVSRVGLLWVLLLNWYSTVLNPAFNSVEVRTTAYNIWAVINHFSNWLATTLSIFYLLKIANFSNFIFLHLKRRVKSVILVMLLGPLLFLACHLFVINMNEIVRTKEFEGNMTWKIKLKSAMYFSNMTVTMVANLVPFTLTLLSFMLLICSLCKHLKKMQLHGKGSQDPSTKVHIKALQTVISFLLLCAIYFLSIMISVWSFGSLENKPVFMFCKAIRFSYPSIHPFILIWGNKKLKQTFLSVFWQMRYWVKGEKTSSP.

Position 1 (Met-1) is a topological domain, extracellular. The chain crosses the membrane as a helical span at residues 2 to 22 (ITFLPIIFSSLVVVTFVIGNF). Residues 23 to 46 (ANGFIALVNSIEWFKRQKISFADQ) lie on the Cytoplasmic side of the membrane. The chain crosses the membrane as a helical span at residues 47–67 (ILTALAVSRVGLLWVLLLNWY). Over 68–86 (STVLNPAFNSVEVRTTAYN) the chain is Extracellular. A helical membrane pass occupies residues 87-107 (IWAVINHFSNWLATTLSIFYL). Topologically, residues 108 to 126 (LKIANFSNFIFLHLKRRVK) are cytoplasmic. The chain crosses the membrane as a helical span at residues 127–147 (SVILVMLLGPLLFLACHLFVI). The Extracellular portion of the chain corresponds to 148 to 178 (NMNEIVRTKEFEGNMTWKIKLKSAMYFSNMT). N-linked (GlcNAc...) asparagine glycans are attached at residues Asn-161 and Asn-176. Residues 179–199 (VTMVANLVPFTLTLLSFMLLI) form a helical membrane-spanning segment. At 200 to 229 (CSLCKHLKKMQLHGKGSQDPSTKVHIKALQ) the chain is on the cytoplasmic side. The chain crosses the membrane as a helical span at residues 230–250 (TVISFLLLCAIYFLSIMISVW). Residues 251–259 (SFGSLENKP) are Extracellular-facing. A helical membrane pass occupies residues 260 to 280 (VFMFCKAIRFSYPSIHPFILI). At 281-309 (WGNKKLKQTFLSVFWQMRYWVKGEKTSSP) the chain is on the cytoplasmic side.

It belongs to the G-protein coupled receptor T2R family. Expressed in subsets of taste receptor cells of the tongue and exclusively in gustducin-positive cells. Expressed in airway epithelia.

Its subcellular location is the membrane. The protein resides in the cell projection. It localises to the cilium membrane. Gustducin-coupled receptor immplicated in the perception of bitter compounds in the oral cavity and the gastrointestinal tract. Signals through PLCB2 and the calcium-regulated cation channel TRPM5. Activated by the sulfonyl amide sweeteners saccharin and acesulfame K. In airway epithelial cells, binding of bitter compounds increases the intracellular calcium ion concentration and stimulates ciliary beat frequency. May act as chemosensory receptors in airway epithelial cells to detect and eliminate potential noxious agents from the airways. This chain is Taste receptor type 2 member 43 (TAS2R43), found in Homo sapiens (Human).